A 478-amino-acid chain; its full sequence is Geranial dehydrogenase (478 aa).

Gly230–Gly235 lines the NAD(+) pocket. The Proton acceptor role is filled by Glu252. The active-site Nucleophile is Cys286.

The protein belongs to the aldehyde dehydrogenase family.

The catalysed reaction is (2E)-geranial + NAD(+) + H2O = geranate + NADH + 2 H(+). The enzyme catalyses perillyl aldehyde + NAD(+) + H2O = perillate + NADH + 2 H(+). It participates in terpene metabolism; monoterpene degradation. Functionally, involved in the degradation of the monoterpenes beta-myrcene and limonene. During anaerobic degradation of beta-myrcene, catalyzes the NAD(+)-dependent oxidation of geranial to geranic acid. Seems to be specific for the trans-isomer geranial, since it does not act on the cis-isomer neral. During degradation of limonene, catalyzes the NAD(+)-dependent conversion of perillyl aldehyde to perrilic acid. The chain is Geranial dehydrogenase from Castellaniella defragrans (strain DSM 12143 / CCUG 39792 / 65Phen) (Alcaligenes defragrans).